The following is an 89-amino-acid chain: Signal recognition particle 19 kDa protein (89 aa).

The protein belongs to the SRP19 family. In terms of assembly, part of the signal recognition particle protein translocation system, which is composed of SRP and FtsY. Archaeal SRP consists of a 7S RNA molecule of 300 nucleotides and two protein subunits: SRP54 and SRP19.

The protein resides in the cytoplasm. In terms of biological role, involved in targeting and insertion of nascent membrane proteins into the cytoplasmic membrane. Binds directly to 7S RNA and mediates binding of the 54 kDa subunit of the SRP. This Methanococcus vannielii (strain ATCC 35089 / DSM 1224 / JCM 13029 / OCM 148 / SB) protein is Signal recognition particle 19 kDa protein.